The primary structure comprises 439 residues: UPF0229 protein Nham_0975 (439 aa).

The tract at residues arginine 39–aspartate 106 is disordered. Residues serine 58–valine 76 are compositionally biased toward basic and acidic residues.

This sequence belongs to the UPF0229 family.

The sequence is that of UPF0229 protein Nham_0975 from Nitrobacter hamburgensis (strain DSM 10229 / NCIMB 13809 / X14).